Consider the following 207-residue polypeptide: MKKVLVFAAFIVLFSFSFLSTGLTAQAALKDGTYSVDYTVIQGDSDSASMANDYFDKPATVTVNGGKSTVSLQVNHSKWITGLWVEGNAVSVTSKNASSDTRKVSFPVSTLSNPVNAKIKVDIDDDDLNYHHEYQIKLRFDEGSAKALAGAVKSSDNNTTTPATKSDSSNKVTNPKSSDSSQMFLYGIIFVATGAGLILLKRRAIFK.

The first 27 residues, M1–A27, serve as a signal peptide directing secretion. In terms of domain architecture, NEAT spans L29 to L148. A disordered region spans residues A151–S178. A compositionally biased stretch (polar residues) spans S154–S178. The NPKXZ sorting signal signature appears at N174 to S178. S177 carries the murein peptidoglycan amidated serine modification. Positions S178–K207 are cleaved as a propeptide — removed by sortase B.

The protein resides in the secreted. It localises to the cell wall. Binds both host hemin and hemoglobin with affinity in the nanomolar range and presumably directs it to membrane transporters. The sequence is that of Hemin/hemoglobin-binding protein 1 from Listeria monocytogenes serovar 1/2a (strain ATCC BAA-679 / EGD-e).